We begin with the raw amino-acid sequence, 489 residues long: Glutamyl-tRNA(Gln) amidotransferase subunit A (489 aa).

Catalysis depends on charge relay system residues Lys78 and Ser153. Ser177 (acyl-ester intermediate) is an active-site residue.

Belongs to the amidase family. GatA subfamily. In terms of assembly, heterotrimer of A, B and C subunits.

The catalysed reaction is L-glutamyl-tRNA(Gln) + L-glutamine + ATP + H2O = L-glutaminyl-tRNA(Gln) + L-glutamate + ADP + phosphate + H(+). Its function is as follows. Allows the formation of correctly charged Gln-tRNA(Gln) through the transamidation of misacylated Glu-tRNA(Gln) in organisms which lack glutaminyl-tRNA synthetase. The reaction takes place in the presence of glutamine and ATP through an activated gamma-phospho-Glu-tRNA(Gln). The polypeptide is Glutamyl-tRNA(Gln) amidotransferase subunit A (Enterococcus faecalis (strain ATCC 700802 / V583)).